A 154-amino-acid chain; its full sequence is Endoribonuclease YbeY (154 aa).

Zn(2+) contacts are provided by His117, His121, and His127.

This sequence belongs to the endoribonuclease YbeY family. Zn(2+) serves as cofactor.

It localises to the cytoplasm. Functionally, single strand-specific metallo-endoribonuclease involved in late-stage 70S ribosome quality control and in maturation of the 3' terminus of the 16S rRNA. In Polaromonas sp. (strain JS666 / ATCC BAA-500), this protein is Endoribonuclease YbeY.